The following is a 98-amino-acid chain: Large ribosomal subunit protein eL14 (98 aa).

Belongs to the eukaryotic ribosomal protein eL14 family.

The sequence is that of Large ribosomal subunit protein eL14 from Thermofilum pendens (strain DSM 2475 / Hrk 5).